The following is a 76-amino-acid chain: Small ribosomal subunit protein bS18 (76 aa).

It belongs to the bacterial ribosomal protein bS18 family. As to quaternary structure, part of the 30S ribosomal subunit. Forms a tight heterodimer with protein bS6.

In terms of biological role, binds as a heterodimer with protein bS6 to the central domain of the 16S rRNA, where it helps stabilize the platform of the 30S subunit. This is Small ribosomal subunit protein bS18 from Xylella fastidiosa (strain M23).